Reading from the N-terminus, the 20-residue chain is Acidic phospholipase A2 CbIbeta (20 aa).

The protein belongs to the phospholipase A2 family. Group II subfamily. D49 sub-subfamily. As to quaternary structure, heterodimer of an acidic subunit (CbIalpha or CbIbeta) and a basic subunit (CbII). The acidic subunit (CbI) is non-toxic, and increases the toxicity of the basic subunit (CbII). Requires Ca(2+) as cofactor. In terms of processing, contains 7 disulfide bonds. As to expression, expressed by the venom gland.

It localises to the secreted. The enzyme catalyses a 1,2-diacyl-sn-glycero-3-phosphocholine + H2O = a 1-acyl-sn-glycero-3-phosphocholine + a fatty acid + H(+). Heterodimer: presynaptic neurotoxin. In terms of biological role, monomer: Snake venom phospholipase A2 (PLA2) is inactive towards micellar phosphatidylcholine but is weakly active towards non-micellar dithiolecithin. PLA2 catalyzes the calcium-dependent hydrolysis of the 2-acyl groups in 3-sn-phosphoglycerides. The protein is Acidic phospholipase A2 CbIbeta of Pseudocerastes fieldi (Field's horned viper).